A 651-amino-acid polypeptide reads, in one-letter code: ATP-binding cassette sub-family G member 5 (651 aa).

Positions 1 to 32 are disordered; sequence MGDLSSLTPGGSMGLQVNRGSQSSLEGAPATA. Topologically, residues 1 to 383 are cytoplasmic; the sequence is MGDLSSLTPG…RVTRNLVRNK (383 aa). Residues 52–293 form the ABC transporter domain; that stretch reads RPWWDITSCR…FNDCGYPCPE (242 aa). 86–93 is a binding site for ATP; sequence GSSGSGKT. The chain crosses the membrane as a helical span at residues 384-404; it reads LAVITRLLQNLIMGLFLLFFV. One can recognise an ABC transmembrane type-2 domain in the interval 388-645; it reads TRLLQNLIMG…ILGIVVFKIR (258 aa). Residues 405-421 lie on the Extracellular side of the membrane; the sequence is LRVRSNVLKGAIQDRVG. A helical transmembrane segment spans residues 422–442; the sequence is LLYQFVGATPYTGMLNAVNLF. At 443 to 467 the chain is on the cytoplasmic side; that stretch reads PVLRAVSDQESQDGLYQKWQMMLAY. A helical transmembrane segment spans residues 468 to 489; that stretch reads ALHVLPFSVVATMIFSSVCYWT. Residues 490–500 lie on the Extracellular side of the membrane; that stretch reads LGLHPEVARFG. The chain crosses the membrane as a helical span at residues 501–521; that stretch reads YFSAALLAPHLIGEFLTLVLL. At 522–528 the chain is on the cytoplasmic side; that stretch reads GIVQNPN. A helical membrane pass occupies residues 529–549; it reads IVNSVVALLSIAGVLVGSGFL. Residues 550 to 623 lie on the Extracellular side of the membrane; sequence RNIQEMPIPF…PGATSRFTMN (74 aa). 2 N-linked (GlcNAc...) asparagine glycosylation sites follow: N584 and N591. Residues 624-644 traverse the membrane as a helical segment; the sequence is FLILYSFIPALVILGIVVFKI. Residues 645 to 651 lie on the Cytoplasmic side of the membrane; that stretch reads RDHLISR.

Belongs to the ABC transporter superfamily. ABCG family. Eye pigment precursor importer (TC 3.A.1.204) subfamily. In terms of assembly, heterodimer with ABCG8. Mg(2+) serves as cofactor. Post-translationally, N-glycosylated. In terms of tissue distribution, strongly expressed in the liver, lower levels in the small intestine and colon.

Its subcellular location is the cell membrane. The protein resides in the apical cell membrane. It carries out the reaction cholesterol(in) + ATP + H2O = cholesterol(out) + ADP + phosphate + H(+). The catalysed reaction is sitosterol(in) + ATP + H2O = sitosterol(out) + ADP + phosphate + H(+). With respect to regulation, the ATPase activity of the heterodimer is stimulated by cholate. Taurocholate, glycocholate, taurochenodeoxycholate, glycochenodeoxycholate and taurodeoxycholate also stimulate ATPase activity, but to a lower degree. Glycodeoxycholate has no significant effect on ATPase activity. ATPase activity is inhibited by vanadate and by berillium fluoride. Its function is as follows. ABCG5 and ABCG8 form an obligate heterodimer that mediates Mg(2+)- and ATP-dependent sterol transport across the cell membrane. Plays an essential role in the selective transport of dietary plant sterols and cholesterol in and out of the enterocytes and in the selective sterol excretion by the liver into bile. Required for normal sterol homeostasis. The heterodimer with ABCG8 has ATPase activity. This Homo sapiens (Human) protein is ATP-binding cassette sub-family G member 5.